The chain runs to 442 residues: Microfibrillar-associated protein 1 (442 aa).

Disordered stretches follow at residues 1–34 and 113–203; these read MSAPSALVKQPPIQSTAGACPSRNEKGRAVYGEG and EVVS…PRLK. Acidic residues-rich tracts occupy residues 134-148 and 181-198; these read DTSEEEEEEIDDEEI and ESELESEYEEYTDSEDEM.

It belongs to the MFAP1 family. Component of the spliceosome B complex. Interacts with PRPF38A (via N-terminal interaction domain). As to expression, widely expressed.

It localises to the nucleus. Functionally, involved in pre-mRNA splicing as a component of the spliceosome. The sequence is that of Microfibrillar-associated protein 1 from Gallus gallus (Chicken).